Here is a 398-residue protein sequence, read N- to C-terminus: Phosphoglycerate kinase (398 aa).

Residues 21–23 (DFN), Arg36, 59–62 (HFGR), Arg117, and Arg150 contribute to the substrate site. ATP-binding positions include Lys200, Glu321, and 351–354 (GGDS).

It belongs to the phosphoglycerate kinase family. As to quaternary structure, monomer.

The protein resides in the cytoplasm. The enzyme catalyses (2R)-3-phosphoglycerate + ATP = (2R)-3-phospho-glyceroyl phosphate + ADP. The protein operates within carbohydrate degradation; glycolysis; pyruvate from D-glyceraldehyde 3-phosphate: step 2/5. The chain is Phosphoglycerate kinase from Wolbachia sp. subsp. Drosophila simulans (strain wRi).